A 489-amino-acid polypeptide reads, in one-letter code: Mitogen-activated protein kinase adapter protein MST50 (489 aa).

The interval 1 to 56 is disordered; that stretch reads MSFNTGTAYAESDADDEYERDIHDSSPIDATDAEASPTESDPPSNEHTPTTYGYRS. Residues 37 to 54 are compositionally biased toward polar residues; the sequence is PTESDPPSNEHTPTTYGY. In terms of domain architecture, SAM spans 69 to 132; it reads WTADECADFI…LRSVYDVKKA (64 aa). Disordered regions lie at residues 207–285 and 309–379; these read PLPH…AAER and SINI…GSNA. Polar residues-rich tracts occupy residues 256–265 and 328–346; these read PKATSPTHLQ and ASRS…STFA. Residues 377-457 enclose the Ras-associating domain; it reads SNASVEIFKS…PMFMLRKTNN (81 aa).

As to quaternary structure, interacts with MST7 and MST11. Interacts with MCK1, MKK2 and HIK1.

Functionally, mitogen-activated protein kinase adapter protein; part of the MST11-MST7-PMK1 MAP kinase (MAPK) cascade that is essential for appressorium formation, penetration and invasive growth. Binds to the MAPKKK MST11 and the MAPKK MST7 to maintain the stability of the MST11-MST7 complex for the phosphorylation of the MAPK PMK1. Is also involved in the MPS1 and OSM1 MAPK pathways, and especially plays a role in the activation of MPS1 in response to cell wall stress. Its function differs in the 3 MAPK pathways. The chain is Mitogen-activated protein kinase adapter protein MST50 from Pyricularia oryzae (strain 70-15 / ATCC MYA-4617 / FGSC 8958) (Rice blast fungus).